The chain runs to 189 residues: Crossover junction endodeoxyribonuclease RuvC (189 aa).

Catalysis depends on residues Asp8, Glu67, and Asp139. The Mg(2+) site is built by Asp8, Glu67, and Asp139.

Belongs to the RuvC family. Homodimer which binds Holliday junction (HJ) DNA. The HJ becomes 2-fold symmetrical on binding to RuvC with unstacked arms; it has a different conformation from HJ DNA in complex with RuvA. In the full resolvosome a probable DNA-RuvA(4)-RuvB(12)-RuvC(2) complex forms which resolves the HJ. Mg(2+) is required as a cofactor.

Its subcellular location is the cytoplasm. It catalyses the reaction Endonucleolytic cleavage at a junction such as a reciprocal single-stranded crossover between two homologous DNA duplexes (Holliday junction).. Functionally, the RuvA-RuvB-RuvC complex processes Holliday junction (HJ) DNA during genetic recombination and DNA repair. Endonuclease that resolves HJ intermediates. Cleaves cruciform DNA by making single-stranded nicks across the HJ at symmetrical positions within the homologous arms, yielding a 5'-phosphate and a 3'-hydroxyl group; requires a central core of homology in the junction. The consensus cleavage sequence is 5'-(A/T)TT(C/G)-3'. Cleavage occurs on the 3'-side of the TT dinucleotide at the point of strand exchange. HJ branch migration catalyzed by RuvA-RuvB allows RuvC to scan DNA until it finds its consensus sequence, where it cleaves and resolves the cruciform DNA. The polypeptide is Crossover junction endodeoxyribonuclease RuvC (Histophilus somni (strain 129Pt) (Haemophilus somnus)).